A 354-amino-acid polypeptide reads, in one-letter code: G-protein coupled estrogen receptor 1 (354 aa).

Topologically, residues methionine 1 to tyrosine 40 are extracellular. Residues valine 41–glycine 61 form a helical membrane-spanning segment. At asparagine 62–leucine 81 the chain is on the cytoplasmic side. A helical membrane pass occupies residues tyrosine 82–phenylalanine 102. Residues asparagine 103–alanine 112 lie on the Extracellular side of the membrane. Residues valine 113 to leucine 133 traverse the membrane as a helical segment. A disulfide bridge links cysteine 115 with cysteine 192. Residues threonine 134–lysine 160 are Cytoplasmic-facing. A helical membrane pass occupies residues leucine 161 to valine 181. The Extracellular portion of the chain corresponds to glutamine 182–leucine 202. A helical membrane pass occupies residues glutamate 203–glycine 223. Residues arginine 224–methionine 245 are Cytoplasmic-facing. Residues isoleucine 246–isoleucine 266 traverse the membrane as a helical segment. The Extracellular portion of the chain corresponds to glutamine 267–histidine 292. Residues isoleucine 293–glycine 313 form a helical membrane-spanning segment. Residues glutamate 314 to glutamate 353 lie on the Cytoplasmic side of the membrane.

This sequence belongs to the G-protein coupled receptor 1 family. In terms of assembly, homodimer. Heterodimer. In terms of tissue distribution, expressed in oocytes (at protein level). Highly expressed in brain, heart, testis and ovary. Weakly expressed in muscle and intestine.

The protein resides in the nucleus. The protein localises to the cytoplasm. It is found in the perinuclear region. Its subcellular location is the cytoskeleton. It localises to the cytoplasmic vesicle membrane. The protein resides in the cell membrane. The protein localises to the basolateral cell membrane. It is found in the endoplasmic reticulum membrane. Its subcellular location is the early endosome. It localises to the recycling endosome. The protein resides in the golgi apparatus. The protein localises to the trans-Golgi network. It is found in the golgi apparatus membrane. Its subcellular location is the cell projection. It localises to the dendrite. The protein resides in the dendritic spine membrane. The protein localises to the axon. It is found in the postsynaptic density. Its subcellular location is the mitochondrion membrane. In terms of biological role, membrane G-protein coupled estrogen receptor that binds to 17-beta-estradiol (E2) with high affinity, leading to rapid and transient activation of numerous intracellular signaling pathways. Plays a role in the embryonic development of sensory and motor neurons. May induce apoptosis and reduce proliferation of brain cells. Involved in maintenance of meiotic arrest in oocytes. The protein is G-protein coupled estrogen receptor 1 (gper1) of Micropogonias undulatus (Atlantic croaker).